Reading from the N-terminus, the 255-residue chain is Probable membrane transporter protein HI_0198 (255 aa).

8 helical membrane passes run 7-27 (LLAILFCVGFVASFIDAIAGG), 28-48 (GGLITIPALLMTGMPPAMALG), 76-96 (IWFILIWVFLGSALGTLLIQS), 99-119 (VAIFKKMLPFLILAIGLYFLF), 132-152 (LSYLLFGLLVSPFLGFYDGFF), 153-173 (GPGTGSIMSLACVTLLGFNLP), 191-211 (FALFLLGGQILWKVGFVMMAG), and 235-255 (VVIMSFMMTAKMVYDQGWFHF).

It belongs to the 4-toluene sulfonate uptake permease (TSUP) (TC 2.A.102) family.

The protein localises to the cell membrane. The polypeptide is Probable membrane transporter protein HI_0198 (Haemophilus influenzae (strain ATCC 51907 / DSM 11121 / KW20 / Rd)).